The chain runs to 210 residues: NAD(P)H-quinone oxidoreductase subunit I (210 aa).

2 4Fe-4S ferredoxin-type domains span residues 55 to 84 and 95 to 124; these read GRIH…VDWV and RNYS…MTEE. Residues Cys64, Cys67, Cys70, Cys74, Cys104, Cys107, Cys110, and Cys114 each coordinate [4Fe-4S] cluster.

Belongs to the complex I 23 kDa subunit family. As to quaternary structure, NDH-1 is composed of at least 11 different subunits. The cofactor is [4Fe-4S] cluster.

The protein localises to the cellular thylakoid membrane. It catalyses the reaction a plastoquinone + NADH + (n+1) H(+)(in) = a plastoquinol + NAD(+) + n H(+)(out). The enzyme catalyses a plastoquinone + NADPH + (n+1) H(+)(in) = a plastoquinol + NADP(+) + n H(+)(out). Its function is as follows. NDH-1 shuttles electrons from an unknown electron donor, via FMN and iron-sulfur (Fe-S) centers, to quinones in the respiratory and/or the photosynthetic chain. The immediate electron acceptor for the enzyme in this species is believed to be plastoquinone. Couples the redox reaction to proton translocation, and thus conserves the redox energy in a proton gradient. The sequence is that of NAD(P)H-quinone oxidoreductase subunit I from Synechococcus sp. (strain CC9902).